The primary structure comprises 96 residues: ATP synthase subunit e, mitochondrial (96 aa).

S2 carries the N-acetylserine modification.

The protein belongs to the ATPase e subunit family. As to quaternary structure, F-type ATPases have 2 components, CF(1) - the catalytic core - and CF(0) - the membrane proton channel. In yeast, the dimeric form of ATP synthase consists of 17 polypeptides: alpha, beta, gamma, delta, epsilon, 4 (B), 5 (OSCP), 6 (A), 8, 9 (C), d, E (Tim11), f, g, h, i/j and k.

It localises to the mitochondrion. It is found in the mitochondrion inner membrane. Mitochondrial membrane ATP synthase (F(1)F(0) ATP synthase or Complex V) produces ATP from ADP in the presence of a proton gradient across the membrane which is generated by electron transport complexes of the respiratory chain. F-type ATPases consist of two structural domains, F(1) - containing the extramembraneous catalytic core, and F(0) - containing the membrane proton channel, linked together by a central stalk and a peripheral stalk. During catalysis, ATP synthesis in the catalytic domain of F(1) is coupled via a rotary mechanism of the central stalk subunits to proton translocation. Part of the complex F(0) domain. Minor subunit located with subunit a in the membrane. The protein is ATP synthase subunit e, mitochondrial (TIM11) of Saccharomyces cerevisiae (strain ATCC 204508 / S288c) (Baker's yeast).